A 121-amino-acid polypeptide reads, in one-letter code: Large ribosomal subunit protein bL19 (121 aa).

Belongs to the bacterial ribosomal protein bL19 family.

Its function is as follows. This protein is located at the 30S-50S ribosomal subunit interface and may play a role in the structure and function of the aminoacyl-tRNA binding site. The protein is Large ribosomal subunit protein bL19 of Gloeobacter violaceus (strain ATCC 29082 / PCC 7421).